Here is a 340-residue protein sequence, read N- to C-terminus: Guanine nucleotide-binding protein G(I)/G(S)/G(T) subunit beta-1 (340 aa).

WD repeat units lie at residues 53–83 (GHLAKIYAMHWGTDSRLLVSASQDGKLIIWD), 95–125 (LRSSWVMTCAYAPSGNYVACGGLDNICPIYN), 141–170 (GHTGYLSCCRFLDDNQIITSSGDTTCALWD), 182–212 (GHTGDVMSLSLAPDSRCFVSGACDASAKLWD), 224–254 (GHESDINAICFFPNGNAFATGSDDATCRLFD), 268–298 (NIICGITSVAFSKSGRLLLAGYDDFNCNVWD), and 310–340 (GHDNRVSCLGVTDDGMAVATGSWDSFLKIWN).

The protein belongs to the WD repeat G protein beta family. In terms of assembly, g proteins are composed of 3 units, alpha, beta and gamma.

Guanine nucleotide-binding proteins (G proteins) are involved as a modulator or transducer in various transmembrane signaling systems. The beta and gamma chains are required for the GTPase activity, for replacement of GDP by GTP, and for G protein-effector interaction. In Xenopus laevis (African clawed frog), this protein is Guanine nucleotide-binding protein G(I)/G(S)/G(T) subunit beta-1 (gnb1).